The primary structure comprises 478 residues: Membrane-bound lytic murein transglycosylase F (478 aa).

Residues 1–22 form the signal peptide; that stretch reads MTRFLFAIILGLLLTACQQETV. A non-LT domain region spans residues 23–257; sequence EETEFVPHKL…HLNEKYFGHV (235 aa). The tract at residues 258–478 is LT domain; sequence KRFDYIDTRA…PGTLSPDKPK (221 aa). Glutamate 302 is an active-site residue. The tract at residues 447-478 is disordered; that stretch reads KQQNSEEVAPSDLTAEETPVPAPGTLSPDKPK.

It in the N-terminal section; belongs to the bacterial solute-binding protein 3 family. The protein in the C-terminal section; belongs to the transglycosylase Slt family.

It is found in the cell outer membrane. It carries out the reaction Exolytic cleavage of the (1-&gt;4)-beta-glycosidic linkage between N-acetylmuramic acid (MurNAc) and N-acetylglucosamine (GlcNAc) residues in peptidoglycan, from either the reducing or the non-reducing ends of the peptidoglycan chains, with concomitant formation of a 1,6-anhydrobond in the MurNAc residue.. In terms of biological role, murein-degrading enzyme that degrades murein glycan strands and insoluble, high-molecular weight murein sacculi, with the concomitant formation of a 1,6-anhydromuramoyl product. Lytic transglycosylases (LTs) play an integral role in the metabolism of the peptidoglycan (PG) sacculus. Their lytic action creates space within the PG sacculus to allow for its expansion as well as for the insertion of various structures such as secretion systems and flagella. This chain is Membrane-bound lytic murein transglycosylase F, found in Shewanella oneidensis (strain ATCC 700550 / JCM 31522 / CIP 106686 / LMG 19005 / NCIMB 14063 / MR-1).